The chain runs to 104 residues: Large ribosomal subunit protein uL24 (104 aa).

Belongs to the universal ribosomal protein uL24 family. Part of the 50S ribosomal subunit.

Its function is as follows. One of two assembly initiator proteins, it binds directly to the 5'-end of the 23S rRNA, where it nucleates assembly of the 50S subunit. One of the proteins that surrounds the polypeptide exit tunnel on the outside of the subunit. This is Large ribosomal subunit protein uL24 from Shewanella amazonensis (strain ATCC BAA-1098 / SB2B).